The sequence spans 241 residues: Probable transcriptional regulatory protein FMG_0893 (241 aa).

Belongs to the TACO1 family.

The protein resides in the cytoplasm. The polypeptide is Probable transcriptional regulatory protein FMG_0893 (Finegoldia magna (strain ATCC 29328 / DSM 20472 / WAL 2508) (Peptostreptococcus magnus)).